A 790-amino-acid polypeptide reads, in one-letter code: Eukaryotic translation initiation factor 3 subunit C (790 aa).

Residues 1–62 form a disordered region; the sequence is MSRFFVSGYN…DGRPSGPAYF (62 aa). Positions 14 to 53 are enriched in acidic residues; the sequence is SSEEEDLLSSEEELLTSSGEENEDSDFFNDDDESSSDEED. Residues 556–728 enclose the PCI domain; the sequence is FHQHINLELL…IVFTTDSQRS (173 aa). Positions 748–790 are disordered; that stretch reads NEKTSSNGYAKKNQSQTQPQAQSKEVEENKFRYANVNTNTDEF. Positions 751–770 are enriched in polar residues; it reads TSSNGYAKKNQSQTQPQAQS.

It belongs to the eIF-3 subunit C family. As to quaternary structure, component of the eukaryotic translation initiation factor 3 (eIF-3) complex.

It is found in the cytoplasm. In terms of biological role, component of the eukaryotic translation initiation factor 3 (eIF-3) complex, which is involved in protein synthesis of a specialized repertoire of mRNAs and, together with other initiation factors, stimulates binding of mRNA and methionyl-tRNAi to the 40S ribosome. The eIF-3 complex specifically targets and initiates translation of a subset of mRNAs involved in cell proliferation. The protein is Eukaryotic translation initiation factor 3 subunit C of Lodderomyces elongisporus (strain ATCC 11503 / CBS 2605 / JCM 1781 / NBRC 1676 / NRRL YB-4239) (Yeast).